A 292-amino-acid chain; its full sequence is Transcription factor HFR1 (292 aa).

A disordered region spans residues 114–153; sequence KRRIQVLSSDDESEEFTREVPSVTRKGSKRRRRDEKMSNK. A basic motif; degenerate region spans residues 134-147; that stretch reads PSVTRKGSKRRRRD. The region spanning 134–183 is the bHLH domain; sequence PSVTRKGSKRRRRDEKMSNKMRKLQQLVPNCHKTDKVSVLDKTIEYMKNL. Residues 139 to 153 are compositionally biased toward basic residues; sequence KGSKRRRRDEKMSNK. The Nuclear localization signal motif lies at 141-148; that stretch reads SKRRRRDE. Positions 148–183 are helix-loop-helix motif; that stretch reads EKMSNKMRKLQQLVPNCHKTDKVSVLDKTIEYMKNL.

As to quaternary structure, binds to FHY1 and FHL. Forms PHYA/FHY1/HFR1 complex. Homodimer and heterodimer with PIF3. Do not interact alone with either phytochrome A (phyA) or B (phyB), but REP1/PIF3 complex binds to phyA and phyB, preferentially to the Pfr forms. Forms non-functional heterodimer with PRE6, causing liberation of PIF4 from the transcriptionally inactive complex HFR1-PIF4. Repressed when bound to PRE1, PRE2 and PRE4. Mainly expressed in fruits and flowers and, to a lower extent, in leaves, stems, seedlings and roots.

It localises to the nucleus. Functionally, atypical bHLH transcription factor that regulates photomorphogenesis through modulation of phytochrome (e.g. PHYA) and cryptochrome signalings. Suppresses the transcriptional regulation activity of PIF4 by forming non-DNA-binding heterodimer. The sequence is that of Transcription factor HFR1 from Arabidopsis thaliana (Mouse-ear cress).